We begin with the raw amino-acid sequence, 200 residues long: Coiled-coil domain-containing protein 28B (200 aa).

The residue at position 1 (M1) is an N-acetylmethionine. Basic residues predominate over residues M1–P10. The segment at M1–Q49 is disordered. Phosphoserine is present on residues S46 and S115. Positions E141–V152 are enriched in acidic residues. Positions E141–M164 are disordered. A coiled-coil region spans residues E158 to I183.

Interacts with BBS1, BBS2, BBS4, BBS5, BBS6, BBS7 and TTC8/BBS8. Interacts with MAPKAP1/SIN1 isoform 1 and RICTOR.

The protein localises to the cytoplasm. It localises to the cytoskeleton. The protein resides in the microtubule organizing center. It is found in the centrosome. Involved in ciliogenesis. Regulates cilia length through its interaction with MAPKAP1/SIN1 but independently of mTORC2 complex. Modulates mTORC2 complex assembly and function, possibly enhances AKT1 phosphorylation. Does not seem to modulate assembly and function of mTORC1 complex. The polypeptide is Coiled-coil domain-containing protein 28B (CCDC28B) (Homo sapiens (Human)).